The following is an 874-amino-acid chain: MKAAEIREKFLKFFESKGHTIVRSSSLVPGNDPTLMFTNSGMVQFKDVFLGTDPRPYSRATTAQRSVRAGGKHNDLENVGYTARHHTFFEMLGNFSFGDYFKHDAIKFAWELLTTVYQLPKDKLWVTVYQEDDEAYDIWAKEVGVPTERIIRIGDNKGARYASDNFWTMGDTGPCGPCTEIFYDHGPDVWGGPPGSPEEDGDRYIEIWNLVFMQFNRDAQGNMTRLPKQSVDTGMGLERLAAVLQHVHSNYEIDLFQNLIKAAARVTEISDLTNNSLKVIADHIRACSFLIVDGVIPGNEGRGYVLRRIVRRAIRHGYKLGRKGAFFHKLVADLVAEMGTAYPELKEAEQRVTDVLRQEEERFFETIEHGMSILEAALADVEAKGGKVLDGELAFKLHDTYGFPLDLTADVCRERGMTVDEPAFDDAMARQREQARAAGKFKATQGLEYSGAKTTFHGYEEIAFDDAKVVALYVDGSAVNEVKAGQDAVVVLDHTPFYAESGGQVGDQGVLANAATRFAVADTLKVQADVIGHHGTLEQGTLKVGDVLRAEIDAQRRARTQRNHSATHLMHKALREVLGAHVQQKGSLVDADKTRFDFAHNAPMTDDEIRRVEQIVNDEILANAPGIVRVMPYDEAVKGGAMALFGEKYGDEVRVLDLGFSRELCGGTHVHRTGDIGLFKIVVEGGVAAGIRRVEAITGDNAVRYVQELDARVNEAAAALKAQPSELTQRIAQVQEQVKSLEKELGALKSKLASSQGDELAQQAVEIGGVYVLAATLDGADAKTLRETVDKLKDKLKSAAIVLAAVEGGKVSLIAGVTPDASKKVKAGELVNFVAQQVGGKGGGRPDMAQAGGTEPANLPGALAGVKGWVEERL.

Zn(2+)-binding residues include histidine 564, histidine 568, cysteine 665, and histidine 669.

The protein belongs to the class-II aminoacyl-tRNA synthetase family. It depends on Zn(2+) as a cofactor.

It localises to the cytoplasm. The enzyme catalyses tRNA(Ala) + L-alanine + ATP = L-alanyl-tRNA(Ala) + AMP + diphosphate. Its function is as follows. Catalyzes the attachment of alanine to tRNA(Ala) in a two-step reaction: alanine is first activated by ATP to form Ala-AMP and then transferred to the acceptor end of tRNA(Ala). Also edits incorrectly charged Ser-tRNA(Ala) and Gly-tRNA(Ala) via its editing domain. The protein is Alanine--tRNA ligase of Burkholderia orbicola (strain MC0-3).